Consider the following 376-residue polypeptide: D-alanine--D-alanine ligase (376 aa).

The 209-residue stretch at 150–358 (KIIFEKEGLP…YSELINKLIE (209 aa)) folds into the ATP-grasp domain. 183 to 238 (EGRLTYPCFVKPSNAGSSVGVNKASDRESLVKALNIAAKNDRRILVEEFINGREIE) contacts ATP. Mg(2+)-binding residues include D311, E325, and N327.

This sequence belongs to the D-alanine--D-alanine ligase family. The cofactor is Mg(2+). Mn(2+) serves as cofactor.

The protein resides in the cytoplasm. The enzyme catalyses 2 D-alanine + ATP = D-alanyl-D-alanine + ADP + phosphate + H(+). It participates in cell wall biogenesis; peptidoglycan biosynthesis. In terms of biological role, cell wall formation. The sequence is that of D-alanine--D-alanine ligase from Ruminiclostridium cellulolyticum (strain ATCC 35319 / DSM 5812 / JCM 6584 / H10) (Clostridium cellulolyticum).